Consider the following 388-residue polypeptide: MALVPPLGREFPPEPVNCPLAAPRELDVVGGTICPAPEEETSRPEQVQASLGLPEHCMGELKSTESATSPSRLPLASSHEHQDGGKPCEHSDSGLEVLEAEQDSLHLCLLRLNFRLQDLERGLGSWTLAHNRIVQMQALQAELRGAAERVDALLAFGEGLAERSEPRAWASLEQVLRALGTHRDTIFQRLWQLQAQLISYSLVLEKANLLDQDLEVEGDSDGPAAGGVWGPWAPSTFPTPAELEWDPAGDVGGLGPSGQKISRIPGAPCELCGYRGPQSSGQGLEDLLSLGLGHRKHLAAHHRRRLRKPQDRKRQVSPSLPDAMLEVDRGVPAPASKRPLTLFFLLLFLLLVGATLLLPLSGVSCCSHARLARTPYLVLSYVNGLPPI.

Residues M1–P339 lie on the Cytoplasmic side of the membrane. Positions E60 to D92 are disordered. Positions S78–D92 are enriched in basic and acidic residues. A KASH domain is found at V331–I388. The chain crosses the membrane as a helical; Anchor for type IV membrane protein span at residues L340–L360. Over S361–I388 the chain is Perinuclear space.

It belongs to the nesprin family. Core component of LINC complexes which are composed of inner nuclear membrane SUN domain-containing proteins coupled to outer nuclear membrane KASH domain-containing nesprins. SUN and KASH domain-containing proteins seem to bind each other promiscuously; however, differentially expression of LINC complex constituents can give rise to specific assemblies. Probably part of a SUN1-containing LINC complex. Interacts with kinesins KIF5B and KLC1. In terms of processing, the disulfid bond with SUN1 or SUN2 is required for stability of the respective LINC complex under tensile forces. In terms of tissue distribution, expressed in secretory epithelial cells, such as those found in exocrine pancreas, bulbourethral gland, mammary gland and salivary gland (at protein level). Also expressed in the cochlea, where it is restricted primarily to the 3 rows of outer hair cells and 1 row of inner hair cells (at protein level). Not detected in other cells of the cochlea, including Deiter's cells and pillar cells, nor in liver and kidney (at protein level).

Its subcellular location is the nucleus outer membrane. As a component of the LINC (LInker of Nucleoskeleton and Cytoskeleton) complex, involved in the connection between the nuclear lamina and the cytoskeleton. The nucleocytoplasmic interactions established by the LINC complex play an important role in the transmission of mechanical forces across the nuclear envelope and in nuclear movement and positioning. Behaves as a kinesin cargo, providing a functional binding site for kinesin-1 at the nuclear envelope. Hence may contribute to the establishment of secretory epithelial morphology, by promoting kinesin-dependent apical migration of the centrosome and Golgi apparatus and basal localization of the nucleus. This chain is Nesprin-4 (Syne4), found in Mus musculus (Mouse).